The primary structure comprises 76 residues: UPF0729 protein C18orf32 (76 aa).

Residues 1–37 (MVCIPCIVIPVLLWIYKKFLEPYIYPLVSPFVSRIWP) are necessary for its localzation to the endoplasmic reticulum and lipid droplets. A disordered region spans residues 46-76 (DTNKGKVNFKGADMNGLPTKGPTEICDKKKD).

It belongs to the UPF0729 family. Interacts with DERL1 and AMFR. In terms of processing, undergoes ER-associated degradation (ERAD).

The protein localises to the endoplasmic reticulum. It is found in the lipid droplet. May activate the NF-kappa-B signaling pathway. In Homo sapiens (Human), this protein is UPF0729 protein C18orf32 (C18orf32).